Consider the following 265-residue polypeptide: Methyl-coenzyme M reductase II subunit gamma (265 aa).

Arg123 is a binding site for coenzyme M.

This sequence belongs to the methyl-coenzyme M reductase gamma subunit family. MCR is a hexamer of two alpha, two beta, and two gamma chains, forming a dimer of heterotrimers. Coenzyme F430 serves as cofactor.

The catalysed reaction is coenzyme B + methyl-coenzyme M = methane + coenzyme M-coenzyme B heterodisulfide. It participates in one-carbon metabolism; methyl-coenzyme M reduction; methane from methyl-coenzyme M: step 1/1. Component of the methyl-coenzyme M reductase (MCR) I that catalyzes the reductive cleavage of methyl-coenzyme M (CoM-S-CH3 or 2-(methylthio)ethanesulfonate) using coenzyme B (CoB or 7-mercaptoheptanoylthreonine phosphate) as reductant which results in the production of methane and the mixed heterodisulfide of CoB and CoM (CoM-S-S-CoB). This is the final step in methanogenesis. This chain is Methyl-coenzyme M reductase II subunit gamma (mrtG), found in Methanothermobacter marburgensis (strain ATCC BAA-927 / DSM 2133 / JCM 14651 / NBRC 100331 / OCM 82 / Marburg) (Methanobacterium thermoautotrophicum).